The chain runs to 204 residues: Methylthioribulose-1-phosphate dehydratase (204 aa).

The Zn(2+) site is built by H94 and H96.

It belongs to the aldolase class II family. MtnB subfamily. Zn(2+) is required as a cofactor.

It catalyses the reaction 5-(methylsulfanyl)-D-ribulose 1-phosphate = 5-methylsulfanyl-2,3-dioxopentyl phosphate + H2O. It participates in amino-acid biosynthesis; L-methionine biosynthesis via salvage pathway; L-methionine from S-methyl-5-thio-alpha-D-ribose 1-phosphate: step 2/6. Catalyzes the dehydration of methylthioribulose-1-phosphate (MTRu-1-P) into 2,3-diketo-5-methylthiopentyl-1-phosphate (DK-MTP-1-P). The sequence is that of Methylthioribulose-1-phosphate dehydratase from Enterobacter sp. (strain 638).